A 180-amino-acid chain; its full sequence is Large ribosomal subunit protein uL6 (180 aa).

It belongs to the universal ribosomal protein uL6 family. As to quaternary structure, part of the 50S ribosomal subunit.

This protein binds to the 23S rRNA, and is important in its secondary structure. It is located near the subunit interface in the base of the L7/L12 stalk, and near the tRNA binding site of the peptidyltransferase center. The sequence is that of Large ribosomal subunit protein uL6 from Prosthecochloris aestuarii (strain DSM 271 / SK 413).